The following is a 100-amino-acid chain: NADH-quinone oxidoreductase subunit K (100 aa).

The next 3 membrane-spanning stretches (helical) occupy residues Pro-3 to Ile-23, Leu-29 to Phe-49, and Ile-60 to Leu-80.

The protein belongs to the complex I subunit 4L family. As to quaternary structure, NDH-1 is composed of 14 different subunits. Subunits NuoA, H, J, K, L, M, N constitute the membrane sector of the complex.

The protein localises to the cell membrane. The catalysed reaction is a quinone + NADH + 5 H(+)(in) = a quinol + NAD(+) + 4 H(+)(out). In terms of biological role, NDH-1 shuttles electrons from NADH, via FMN and iron-sulfur (Fe-S) centers, to quinones in the respiratory chain. The immediate electron acceptor for the enzyme in this species is believed to be ubiquinone. Couples the redox reaction to proton translocation (for every two electrons transferred, four hydrogen ions are translocated across the cytoplasmic membrane), and thus conserves the redox energy in a proton gradient. The polypeptide is NADH-quinone oxidoreductase subunit K (Roseiflexus castenholzii (strain DSM 13941 / HLO8)).